The primary structure comprises 35 residues: Photosystem II reaction center protein M (35 aa).

Residues 7 to 27 form a helical membrane-spanning segment; it reads GFIATILFVLVPTVFLLILYI.

The protein belongs to the PsbM family. PSII is composed of 1 copy each of membrane proteins PsbA, PsbB, PsbC, PsbD, PsbE, PsbF, PsbH, PsbI, PsbJ, PsbK, PsbL, PsbM, PsbT, PsbX, PsbY, PsbZ, Psb30/Ycf12, peripheral proteins PsbO, CyanoQ (PsbQ), PsbU, PsbV and a large number of cofactors. It forms dimeric complexes.

It is found in the cellular thylakoid membrane. Functionally, one of the components of the core complex of photosystem II (PSII). PSII is a light-driven water:plastoquinone oxidoreductase that uses light energy to abstract electrons from H(2)O, generating O(2) and a proton gradient subsequently used for ATP formation. It consists of a core antenna complex that captures photons, and an electron transfer chain that converts photonic excitation into a charge separation. This subunit is found at the monomer-monomer interface. This Gloeothece citriformis (strain PCC 7424) (Cyanothece sp. (strain PCC 7424)) protein is Photosystem II reaction center protein M.